An 84-amino-acid polypeptide reads, in one-letter code: Small ribosomal subunit protein uS17 (84 aa).

The protein belongs to the universal ribosomal protein uS17 family. In terms of assembly, part of the 30S ribosomal subunit.

In terms of biological role, one of the primary rRNA binding proteins, it binds specifically to the 5'-end of 16S ribosomal RNA. This is Small ribosomal subunit protein uS17 from Alkaliphilus oremlandii (strain OhILAs) (Clostridium oremlandii (strain OhILAs)).